Reading from the N-terminus, the 1387-residue chain is Kinesin-like protein KIF15-B (1387 aa).

One can recognise a Kinesin motor domain in the interval Ala26 to Ile364. Gly110–Thr117 contacts ATP. Positions Val369–Cys1383 form a coiled coil. Residues Asn1138–Asp1387 are necessary for its targeting to microtubule minus ends.

Belongs to the TRAFAC class myosin-kinesin ATPase superfamily. Kinesin family. KLP2 subfamily. In terms of assembly, homodimer. Dimerization is required for targeting to microtubule minus ends. Found in a complex with tpx2 and microtubules. Its association with microtubules and targeting to microtubule minus ends requires tpx2. Strongly expressed in testis and weakly in lung (at protein level).

It localises to the cytoplasm. It is found in the cytoskeleton. The protein localises to the microtubule organizing center. Its subcellular location is the centrosome. The protein resides in the spindle. It localises to the spindle pole. Functionally, plus-end directed kinesin-like motor enzyme involved in mitotic spindle assembly. Required for centrosome separation and maintenance of spindle bipolarity during mitosis. The protein is Kinesin-like protein KIF15-B (kif15-b) of Xenopus laevis (African clawed frog).